The primary structure comprises 109 residues: Aquaporin-2 (109 aa).

Over 1 to 6 (SIAFSR) the chain is Cytoplasmic. A helical membrane pass occupies residues 7 to 27 (AVFSEFLATLLFVFFGLGSAL). Residues 28 to 35 (NWPQALPS) lie on the Extracellular side of the membrane. A helical transmembrane segment spans residues 36-54 (VLQIAMAFGLAIGTLVQAL). Residues 55 to 59 (GHISG) are Cytoplasmic-facing. Positions 60 to 69 (AHINPAVTVA) form an intramembrane region, discontinuously helical. The NPA 1 motif lies at 63–65 (NPA). Residues 70–80 (CLVGCHVSFLR) are Cytoplasmic-facing. Residues 81–102 (ATFYLAAQLLGAVAGAAILHEI) traverse the membrane as a helical segment. The Extracellular portion of the chain corresponds to 103-109 (TPPDIRG).

The protein belongs to the MIP/aquaporin (TC 1.A.8) family. As to quaternary structure, homotetramer. In terms of processing, serine phosphorylation is necessary and sufficient for expression at the apical membrane. Endocytosis is not phosphorylation-dependent. N-glycosylated.

It is found in the apical cell membrane. It localises to the basolateral cell membrane. The protein resides in the cell membrane. Its subcellular location is the cytoplasmic vesicle membrane. The protein localises to the golgi apparatus. It is found in the trans-Golgi network membrane. It carries out the reaction H2O(in) = H2O(out). The catalysed reaction is glycerol(in) = glycerol(out). Its function is as follows. Forms a water-specific channel that provides the plasma membranes of renal collecting duct with high permeability to water, thereby permitting water to move in the direction of an osmotic gradient. Plays an essential role in renal water homeostasis. Could also be permeable to glycerol. This is Aquaporin-2 from Dugong dugon (Dugong).